Reading from the N-terminus, the 1263-residue chain is DNA topoisomerase 2 (1263 aa).

Residues N80, N109, 137 to 139 (STN), and 150 to 157 (GKNGFGAK) each bind ATP. Positions 329–331 (VKK) are interaction with DNA. 362 to 364 (QTK) serves as a coordination point for ATP. Residues 439 to 553 (CTLILTEGDS…SLVKYEGFIQ (115 aa)) form the Toprim domain. Residues E445, D522, and D524 each contribute to the Mg(2+) site. One can recognise a Topo IIA-type catalytic domain in the interval 737 to 1223 (VPNLMDGFKP…SPEEIWEEEL (487 aa)). The O-(5'-phospho-DNA)-tyrosine intermediate role is filled by Y828. Positions 977–1015 (KKASKAVSSAKNTKTTTKAGSKTGSRTRKNPALAKKSQK) are disordered. Positions 981 to 1000 (KAVSSAKNTKTTTKAGSKTG) are enriched in low complexity. Positions 1068 to 1077 (KLVKPLNLTN) are interaction with DNA. The interval 1244–1263 (LLNKKKGSTGKKSRKTSTQK) is disordered. Over residues 1247 to 1263 (KKKGSTGKKSRKTSTQK) the composition is skewed to basic residues.

Belongs to the type II topoisomerase family. Mg(2+) serves as cofactor. The cofactor is Mn(2+). Requires Ca(2+) as cofactor.

The enzyme catalyses ATP-dependent breakage, passage and rejoining of double-stranded DNA.. Can introduce negative superhelical turns into double-stranded circular DNA. The protein is DNA topoisomerase 2 (TOP2) of Acanthamoeba polyphaga (Amoeba).